The chain runs to 177 residues: Translation initiation factor IF-3 (177 aa).

The protein belongs to the IF-3 family. As to quaternary structure, monomer.

The protein localises to the cytoplasm. Functionally, IF-3 binds to the 30S ribosomal subunit and shifts the equilibrium between 70S ribosomes and their 50S and 30S subunits in favor of the free subunits, thus enhancing the availability of 30S subunits on which protein synthesis initiation begins. This is Translation initiation factor IF-3 from Synechocystis sp. (strain ATCC 27184 / PCC 6803 / Kazusa).